We begin with the raw amino-acid sequence, 124 residues long: Small ribosomal subunit protein uS12 (124 aa).

D89 bears the 3-methylthioaspartic acid mark.

It belongs to the universal ribosomal protein uS12 family. In terms of assembly, part of the 30S ribosomal subunit. Contacts proteins S8 and S17. May interact with IF1 in the 30S initiation complex.

Its function is as follows. With S4 and S5 plays an important role in translational accuracy. Interacts with and stabilizes bases of the 16S rRNA that are involved in tRNA selection in the A site and with the mRNA backbone. Located at the interface of the 30S and 50S subunits, it traverses the body of the 30S subunit contacting proteins on the other side and probably holding the rRNA structure together. The combined cluster of proteins S8, S12 and S17 appears to hold together the shoulder and platform of the 30S subunit. The polypeptide is Small ribosomal subunit protein uS12 (Erwinia tasmaniensis (strain DSM 17950 / CFBP 7177 / CIP 109463 / NCPPB 4357 / Et1/99)).